Here is a 453-residue protein sequence, read N- to C-terminus: Sialic acid-binding Ig-like lectin 6 (453 aa).

An N-terminal signal peptide occupies residues 1-26 (MQGAQEASASEMLPLLLPLLWAGALA). Over 27–347 (QERRFQLEGP…WKPEGRAGGV (321 aa)) the chain is Extracellular. Positions 28 to 123 (ERRFQLEGPE…RDNAAYFFRL (96 aa)) constitute an Ig-like V-type domain. Intrachain disulfides connect Cys-46-Cys-172, Cys-51-Cys-104, and Cys-166-Cys-215. An N-linked (GlcNAc...) asparagine glycan is attached at Asn-103. Arg-122 contacts N-acetylneuraminate. The 84-residue stretch at 148–231 (PNISIPGTLE…AGVTMERTIQ (84 aa)) folds into the Ig-like C2-type 1 domain. Residues Asn-149 and Asn-163 are each glycosylated (N-linked (GlcNAc...) asparagine). A glycan (N-linked (GlcNAc...) asparagine) is linked at Asn-233. The region spanning 238–333 (PQKVAISIFQ…PLGSLQISLS (96 aa)) is the Ig-like C2-type 2 domain. The cysteines at positions 274 and 319 are disulfide-linked. Residues 348-368 (LGAVWGASITTLVFLCVCFIF) form a helical membrane-spanning segment. Residues 369–453 (RVKTRRKKAA…TEYSEIKIHK (85 aa)) are Cytoplasmic-facing. The ITIM motif signature appears at 424–429 (LHYAVL). The SLAM-like motif motif lies at 444 to 449 (TEYSEI).

This sequence belongs to the immunoglobulin superfamily. SIGLEC (sialic acid binding Ig-like lectin) family. In terms of assembly, interacts with LEP. In terms of tissue distribution, expressed at high levels in placenta (cyto- and syncytiotrophoblastic cells) and at lower levels in spleen, peripheral blood leukocytes (predominantly B-cells) and small intestine.

The protein localises to the cell membrane. The protein resides in the secreted. Functionally, putative adhesion molecule that mediates sialic-acid dependent binding to cells. Binds to alpha-2,6-linked sialic acid. The sialic acid recognition site may be masked by cis interactions with sialic acids on the same cell surface. The protein is Sialic acid-binding Ig-like lectin 6 (SIGLEC6) of Homo sapiens (Human).